We begin with the raw amino-acid sequence, 330 residues long: Transcription factor TGA5 (330 aa).

Over residues 1–13 (MGDTSPRTSVSTD) the composition is skewed to polar residues. A disordered region spans residues 1–64 (MGDTSPRTSV…REAARKSRLR (64 aa)). Positions 35 to 47 (SSDRSKSKMDQKT) are enriched in basic and acidic residues. Residues 44 to 107 (DQKTLRRLAQ…SSGDQAHSTA (64 aa)) form the bZIP domain. Coiled coils occupy residues 45-98 (QKTL…FISS) and 211-244 (EQQS…SLAD). The tract at residues 46–66 (KTLRRLAQNREAARKSRLRKK) is basic motif. Positions 72–86 (LENSRLKLTQLEQEL) are leucine-zipper. Residues 111–327 (AMAFDVEYRR…RALSSLWLAR (217 aa)) enclose the DOG1 domain.

It belongs to the bZIP family. Binds DNA as a dimer. Interaction with the Dof domain protein OBP1 enhances the binding to the ocs element. Interacts with NPR1, NPR3 and NPR4. In terms of tissue distribution, predominantly expressed in roots.

The protein resides in the nucleus. In terms of biological role, transcriptional activator that binds specifically to the DNA sequence 5'-TGACG-3'. Recognizes ocs elements like the as-1 motif of the cauliflower mosaic virus 35S promoter. Binding to the as-1-like cis elements mediate auxin- and salicylic acid-inducible transcription. May be involved in the induction of the systemic acquired resistance (SAR) via its interaction with NPR1. Could also bind to the Hex-motif (5'-TGACGTGG-3') another cis-acting element found in plant histone promoters. The chain is Transcription factor TGA5 (TGA5) from Arabidopsis thaliana (Mouse-ear cress).